We begin with the raw amino-acid sequence, 366 residues long: DNA-directed RNA polymerase subunit alpha (366 aa).

The interval 1–260 is alpha N-terminal domain (alpha-NTD); it reads MAISDNGGGS…DQLQSFIGSE (260 aa). The alpha C-terminal domain (alpha-CTD) stretch occupies residues 274 to 366; the sequence is EGALPYDHNL…ENLSKQYSED (93 aa).

The protein belongs to the RNA polymerase alpha chain family. Homodimer. The RNAP catalytic core consists of 2 alpha, 1 beta, 1 beta' and 1 omega subunit. When a sigma factor is associated with the core the holoenzyme is formed, which can initiate transcription.

The catalysed reaction is RNA(n) + a ribonucleoside 5'-triphosphate = RNA(n+1) + diphosphate. In terms of biological role, DNA-dependent RNA polymerase catalyzes the transcription of DNA into RNA using the four ribonucleoside triphosphates as substrates. This is DNA-directed RNA polymerase subunit alpha from Anaplasma marginale (strain St. Maries).